A 518-amino-acid polypeptide reads, in one-letter code: Glutamate--cysteine ligase (518 aa).

The protein belongs to the glutamate--cysteine ligase type 1 family. Type 1 subfamily.

The enzyme catalyses L-cysteine + L-glutamate + ATP = gamma-L-glutamyl-L-cysteine + ADP + phosphate + H(+). The protein operates within sulfur metabolism; glutathione biosynthesis; glutathione from L-cysteine and L-glutamate: step 1/2. This Buchnera aphidicola subsp. Acyrthosiphon pisum (strain 5A) protein is Glutamate--cysteine ligase.